The sequence spans 304 residues: tRNA pseudouridine synthase B (304 aa).

The Nucleophile role is filled by Asp38.

It belongs to the pseudouridine synthase TruB family. Type 1 subfamily.

The enzyme catalyses uridine(55) in tRNA = pseudouridine(55) in tRNA. Its function is as follows. Responsible for synthesis of pseudouridine from uracil-55 in the psi GC loop of transfer RNAs. The polypeptide is tRNA pseudouridine synthase B (Listeria welshimeri serovar 6b (strain ATCC 35897 / DSM 20650 / CCUG 15529 / CIP 8149 / NCTC 11857 / SLCC 5334 / V8)).